A 376-amino-acid chain; its full sequence is Putative C-mannosyltransferase DPY19L2P2 (376 aa).

Residue Asn-32 is glycosylated (N-linked (GlcNAc...) asparagine). The next 6 membrane-spanning stretches (helical) occupy residues 52-72, 107-127, 154-174, 182-202, 233-253, and 299-319; these read ACFY…LFFI, LRES…TLIL, AQFI…VGYI, IIYM…GNSM, LNCW…LKFL, and LLIY…CFIF.

The protein belongs to the dpy-19 family. Fibroblast, lung, lymphoblast, spleen and testis.

The protein resides in the membrane. In terms of biological role, probable C-mannosyltransferase that mediates C-mannosylation of tryptophan residues on target proteins. This is Putative C-mannosyltransferase DPY19L2P2 (DPY19L2P2) from Homo sapiens (Human).